The sequence spans 156 residues: Radiation-inducible immediate-early gene IEX-1 (156 aa).

Residues 1-62 form a disordered region; that stretch reads MCHSRSCHPT…SASRGHRKRS (62 aa). The Cytoplasmic portion of the chain corresponds to 1 to 82; it reads MCHSRSCHPT…RQLPVEEPNP (82 aa). Position 18 is a phosphothreonine; by MAPK1 (T18). S31 bears the Phosphoserine mark. The segment covering 44-55 has biased composition (low complexity); the sequence is PAAAPAGRPSAS. The helical; Signal-anchor for type II membrane protein transmembrane segment at 83 to 99 threads the bilayer; that stretch reads AKRLLFLLLTIVFCQIL. Residues 100–156 are Extracellular-facing; the sequence is MAEEGVPAPLPPEDAPNAASLAPTPVSAVLEPFNLTSEPSDYALDLSTFLQQHPAAF. T123 is modified (phosphothreonine; by MAPK1). Position 126 is a phosphoserine; by MAPK1 (S126). The N-linked (GlcNAc...) asparagine glycan is linked to N133.

This sequence belongs to the IER3 family. As to quaternary structure, interacts with the PPP2R5C-PP2A holoenzyme and ERK kinases; regulates ERK dephosphorylation. Phosphorylated at Thr-18, Thr-123 and Ser-126 by MAPK1/ERK2 and probably MAPK3/ERK1. Upon phosphorylation by MAPK1/ERK2 and MAPK3/ERK1, acquires the ability to inhibit cell death induced by various stimuli. In terms of processing, glycosylated.

Its subcellular location is the membrane. May play a role in the ERK signaling pathway by inhibiting the dephosphorylation of ERK by phosphatase PP2A-PPP2R5C holoenzyme. Also acts as an ERK downstream effector mediating survival. As a member of the NUPR1/RELB/IER3 survival pathway, may provide pancreatic ductal adenocarcinoma with remarkable resistance to cell stress, such as starvation or gemcitabine treatment. The chain is Radiation-inducible immediate-early gene IEX-1 (IER3) from Homo sapiens (Human).